Here is a 286-residue protein sequence, read N- to C-terminus: Polyamine aminopropyltransferase (286 aa).

Residues 5–238 form the PABS domain; that stretch reads TMWHETLHDQ…GIMTFAWATN (234 aa). An S-methyl-5'-thioadenosine-binding site is contributed by glutamine 33. Histidine 64 and aspartate 88 together coordinate spermidine. S-methyl-5'-thioadenosine-binding positions include glutamate 108 and 140 to 141; that span reads DG. The active-site Proton acceptor is the aspartate 158. 158–161 contributes to the spermidine binding site; the sequence is DCTD. Residue proline 165 coordinates S-methyl-5'-thioadenosine.

It belongs to the spermidine/spermine synthase family. As to quaternary structure, homodimer or homotetramer.

The protein localises to the cytoplasm. It catalyses the reaction S-adenosyl 3-(methylsulfanyl)propylamine + putrescine = S-methyl-5'-thioadenosine + spermidine + H(+). Its pathway is amine and polyamine biosynthesis; spermidine biosynthesis; spermidine from putrescine: step 1/1. In terms of biological role, catalyzes the irreversible transfer of a propylamine group from the amino donor S-adenosylmethioninamine (decarboxy-AdoMet) to putrescine (1,4-diaminobutane) to yield spermidine. The polypeptide is Polyamine aminopropyltransferase (Salmonella paratyphi B (strain ATCC BAA-1250 / SPB7)).